The sequence spans 626 residues: UPF0313 protein MM_1287 (626 aa).

Positions 206–227 (GKGKEKAGEQDESENATEEVAK) are disordered. A Radical SAM core domain is found at 320 to 589 (ALEMVKFSLT…AMQRALMHYR (270 aa)). [4Fe-4S] cluster contacts are provided by cysteine 334, cysteine 338, and cysteine 341.

The protein belongs to the UPF0313 family. [4Fe-4S] cluster is required as a cofactor.

This Methanosarcina mazei (strain ATCC BAA-159 / DSM 3647 / Goe1 / Go1 / JCM 11833 / OCM 88) (Methanosarcina frisia) protein is UPF0313 protein MM_1287.